A 487-amino-acid polypeptide reads, in one-letter code: Glutamyl-tRNA(Gln) amidotransferase subunit A (487 aa).

Residues lysine 74 and serine 149 each act as charge relay system in the active site. Serine 173 (acyl-ester intermediate) is an active-site residue.

This sequence belongs to the amidase family. GatA subfamily. Heterotrimer of A, B and C subunits.

It catalyses the reaction L-glutamyl-tRNA(Gln) + L-glutamine + ATP + H2O = L-glutaminyl-tRNA(Gln) + L-glutamate + ADP + phosphate + H(+). Its function is as follows. Allows the formation of correctly charged Gln-tRNA(Gln) through the transamidation of misacylated Glu-tRNA(Gln) in organisms which lack glutaminyl-tRNA synthetase. The reaction takes place in the presence of glutamine and ATP through an activated gamma-phospho-Glu-tRNA(Gln). This Prochlorococcus marinus (strain MIT 9211) protein is Glutamyl-tRNA(Gln) amidotransferase subunit A.